A 246-amino-acid chain; its full sequence is MKTFIFLALLGATVAFPIDDDDKIVGGYTCSRNSVPYQVSLNSGYHFCGGSLINSQWVVSAAHCYKSRIQVRLGEYNIAVSEGGEQFINAAKIIRHPRYNANTIDNDIMLIKLSSPATLNSRVSAIALPKSCPAAGTQCLISGWGNTQSIGQNYPDVLQCLKAPILSDSVCRNAYPGQISSNMMCLGYMEGGKDSCQGDSGGPVVCNGELQGVVSWGAGCAQKGKPGVSPKVCKYVSWIQQTIAAN.

The N-terminal stretch at 1 to 15 is a signal peptide; sequence MKTFIFLALLGATVA. A propeptide spans 16-23 (activation peptide); it reads FPIDDDDK. The 221-residue stretch at 24 to 244 folds into the Peptidase S1 domain; that stretch reads IVGGYTCSRN…YVSWIQQTIA (221 aa). 6 disulfides stabilise this stretch: Cys-30/Cys-160, Cys-48/Cys-64, Cys-132/Cys-233, Cys-139/Cys-206, Cys-171/Cys-185, and Cys-196/Cys-220. His-63 acts as the Charge relay system in catalysis. Positions 75, 77, 80, and 85 each coordinate Ca(2+). The active-site Charge relay system is the Asp-107. Ser-200 functions as the Charge relay system in the catalytic mechanism.

It belongs to the peptidase S1 family. In terms of assembly, interacts with SERPINA1. The cofactor is Ca(2+).

It localises to the secreted. The protein resides in the extracellular space. The enzyme catalyses Preferential cleavage: Arg-|-Xaa, Lys-|-Xaa.. This Canis lupus familiaris (Dog) protein is Serine protease 1.